A 98-amino-acid chain; its full sequence is Co-chaperonin GroES (98 aa).

The protein belongs to the GroES chaperonin family. As to quaternary structure, heptamer of 7 subunits arranged in a ring. Interacts with the chaperonin GroEL.

The protein resides in the cytoplasm. Together with the chaperonin GroEL, plays an essential role in assisting protein folding. The GroEL-GroES system forms a nano-cage that allows encapsulation of the non-native substrate proteins and provides a physical environment optimized to promote and accelerate protein folding. GroES binds to the apical surface of the GroEL ring, thereby capping the opening of the GroEL channel. The protein is Co-chaperonin GroES of Bartonella bacilliformis (strain ATCC 35685 / KC583 / Herrer 020/F12,63).